The primary structure comprises 1105 residues: KAT8 regulatory NSL complex subunit 1 (1105 aa).

An N6-acetyllysine modification is found at lysine 104. Disordered regions lie at residues 145-211 and 225-263; these read GQTA…CTLP and NNST…GVKL. Positions 225-258 are enriched in polar residues; that stretch reads NNSTANKSSVNSMEQPALQGSSRLSPGTDSSSNL. Serine 249 is modified (phosphoserine). Residue lysine 262 forms a Glycyl lysine isopeptide (Lys-Gly) (interchain with G-Cter in SUMO2) linkage. Serine 268 bears the Phosphoserine mark. A coiled-coil region spans residues 283–314; that stretch reads RITALLRRQADIESRARRLQKRLQVVQAKQVE. Residue lysine 331 forms a Glycyl lysine isopeptide (Lys-Gly) (interchain with G-Cter in SUMO2) linkage. 2 disordered regions span residues 399–426 and 733–857; these read DSDV…PEQR and TAKL…RRGE. Composition is skewed to basic and acidic residues over residues 741-753 and 780-804; these read TRPD…HLDD and DPNH…HHTD. The segment covering 827–850 has biased composition (low complexity); the sequence is STSSDSPAPASSSSQVTASTSQQP. The interval 850-882 is required for activation of KAT8 histone acetyltransferase activity; that stretch reads PVRRRRGESSFDINNIVIPMSVAATTRVEKLQY. The PEHE domain occupies 884–1035; that stretch reads EILTPSWREV…GLDEQSVQPW (152 aa). Residues 910–928 are interaction with KAT8 HAT domain; sequence EDLSDAAFAALHAKCEEME. A disordered region spans residues 938–1034; sequence VPPQRRGSRS…LGLDEQSVQP (97 aa). A compositionally biased stretch (polar residues) spans 955-965; sequence TTPQLGSANPS. A compositionally biased stretch (low complexity) spans 975 to 988; the sequence is SSSHSLSEYSHGQS. 2 positions are modified to phosphoserine: serine 991 and serine 994. The residue at position 1003 (threonine 1003) is a Phosphothreonine. The span at 1008–1019 shows a compositional bias: basic and acidic residues; sequence DTPRHLASEDTR. The residue at position 1045 (serine 1045) is a Phosphoserine. The interval 1058 to 1105 is disordered; that stretch reads ERAARCTRRTSGSKTGRETEAAPTSPPIVPLKSRHLVAAATAQRPTHR.

Component of the NSL complex at least composed of MOF/KAT8, KANSL1, KANSL2, KANSL3, MCRS1, PHF20, OGT1/OGT, WDR5 and HCFC1. Interacts (via PEHE domain) with KAT8 (via HAT domain); the interaction is direct. Component of some MLL1/MLL complex, at least composed of the core components KMT2A/MLL1, ASH2L, HCFC1, WDR5 and RBBP5, as well as the facultative components BACC1, CHD8, E2F6, HSP70, INO80C, KANSL1, LAS1L, MAX, MCRS1, MGA, KAT8/MOF, PELP1, PHF20, PRP31, RING2, RUVB1/TIP49A, RUVB2/TIP49B, SENP3, TAF1, TAF4, TAF6, TAF7, TAF9 and TEX10. In terms of tissue distribution, expressed in the brain.

Its subcellular location is the nucleus. It is found in the chromosome. It localises to the centromere. The protein resides in the kinetochore. The protein localises to the mitochondrion. Its subcellular location is the cytoplasm. It is found in the cytoskeleton. It localises to the spindle pole. Non-catalytic component of the NSL histone acetyltransferase complex, a multiprotein complex that mediates histone H4 acetylation at 'Lys-5'- and 'Lys-8' (H4K5ac and H4K8ac) at transcription start sites and promotes transcription initiation. The NSL complex also acts as a regulator of gene expression in mitochondria. In addition to its role in transcription, KANSL1 also plays an essential role in spindle assembly during mitosis. Associates with microtubule ends and contributes to microtubule stability. The polypeptide is KAT8 regulatory NSL complex subunit 1 (KANSL1) (Homo sapiens (Human)).